Reading from the N-terminus, the 236-residue chain is Purine nucleoside phosphorylase DeoD-type (236 aa).

Residue histidine 5 participates in a purine D-ribonucleoside binding. Residues glycine 21, arginine 25, arginine 44, and 88-91 each bind phosphate; that span reads RVGT. Residues 180–182 and 204–205 contribute to the a purine D-ribonucleoside site; these read EME and SD. Aspartate 205 functions as the Proton donor in the catalytic mechanism.

Belongs to the PNP/UDP phosphorylase family. As to quaternary structure, homohexamer; trimer of homodimers.

The catalysed reaction is a purine D-ribonucleoside + phosphate = a purine nucleobase + alpha-D-ribose 1-phosphate. The enzyme catalyses a purine 2'-deoxy-D-ribonucleoside + phosphate = a purine nucleobase + 2-deoxy-alpha-D-ribose 1-phosphate. Functionally, catalyzes the reversible phosphorolytic breakdown of the N-glycosidic bond in the beta-(deoxy)ribonucleoside molecules, with the formation of the corresponding free purine bases and pentose-1-phosphate. The protein is Purine nucleoside phosphorylase DeoD-type of Shewanella baltica (strain OS223).